The sequence spans 507 residues: Dihydrolipoyllysine-residue acetyltransferase component of pyruvate dehydrogenase complex, mitochondrial (507 aa).

The Lipoyl-binding domain occupies 77–153 (HNRVALPALS…PIGKLLCIIV (77 aa)). K118 is subject to N6-lipoyllysine. Disordered regions lie at residues 168-223 (DGAS…VSAS) and 248-270 (RILASDLSQAPAKGATSTTTQAV). The Peripheral subunit-binding (PSBD) domain occupies 221–258 (SASPFAKKLAAENGLDLSGVSGSGPGGRILASDLSQAP). Active-site residues include H480 and D484.

The protein belongs to the 2-oxoacid dehydrogenase family. Requires (R)-lipoate as cofactor.

It localises to the mitochondrion matrix. It carries out the reaction N(6)-[(R)-dihydrolipoyl]-L-lysyl-[protein] + acetyl-CoA = N(6)-[(R)-S(8)-acetyldihydrolipoyl]-L-lysyl-[protein] + CoA. Its function is as follows. The pyruvate dehydrogenase complex catalyzes the overall conversion of pyruvate to acetyl-CoA and CO(2). It contains multiple copies of three enzymatic components: pyruvate dehydrogenase (E1), dihydrolipoamide acetyltransferase (E2) and lipoamide dehydrogenase (E3). The polypeptide is Dihydrolipoyllysine-residue acetyltransferase component of pyruvate dehydrogenase complex, mitochondrial (Caenorhabditis elegans).